Here is a 596-residue protein sequence, read N- to C-terminus: Actin-histidine N-methyltransferase (596 aa).

Residues R75, 104–106 (EGY), R254, 275–279 (DMCNH), and 325–327 (NGF) each bind S-adenosyl-L-methionine. The SET domain maps to 94–314 (DGFEISNFAD…EGEQIYIFYG (221 aa)). Positions 556-596 (QCKDLNGTQEDPPGGGAVVKEIEKHDPSAKRTEGEPKDAGK) are disordered. Positions 575 to 596 (KEIEKHDPSAKRTEGEPKDAGK) are enriched in basic and acidic residues.

Belongs to the class V-like SAM-binding methyltransferase superfamily. SETD3 actin-histidine methyltransferase family.

The protein resides in the cytoplasm. It carries out the reaction L-histidyl-[protein] + S-adenosyl-L-methionine = N(tele)-methyl-L-histidyl-[protein] + S-adenosyl-L-homocysteine + H(+). Protein-histidine N-methyltransferase that specifically mediates 3-methylhistidine (tele-methylhistidine) methylation of actin at 'His-73'. Does not have protein-lysine N-methyltransferase activity and probably only catalyzes histidine methylation of actin. In Danio rerio (Zebrafish), this protein is Actin-histidine N-methyltransferase.